The primary structure comprises 420 residues: UDP-N-acetylglucosamine 1-carboxyvinyltransferase (420 aa).

Position 22–23 (lysine 22–asparagine 23) interacts with phosphoenolpyruvate. Position 94 (arginine 94) interacts with UDP-N-acetyl-alpha-D-glucosamine. Cysteine 118 functions as the Proton donor in the catalytic mechanism. Cysteine 118 carries the post-translational modification 2-(S-cysteinyl)pyruvic acid O-phosphothioketal. UDP-N-acetyl-alpha-D-glucosamine contacts are provided by aspartate 307 and isoleucine 329.

The protein belongs to the EPSP synthase family. MurA subfamily.

The protein resides in the cytoplasm. The enzyme catalyses phosphoenolpyruvate + UDP-N-acetyl-alpha-D-glucosamine = UDP-N-acetyl-3-O-(1-carboxyvinyl)-alpha-D-glucosamine + phosphate. The protein operates within cell wall biogenesis; peptidoglycan biosynthesis. In terms of biological role, cell wall formation. Adds enolpyruvyl to UDP-N-acetylglucosamine. The protein is UDP-N-acetylglucosamine 1-carboxyvinyltransferase of Granulibacter bethesdensis (strain ATCC BAA-1260 / CGDNIH1).